The chain runs to 436 residues: 3-ketoacyl-CoA thiolase (436 aa).

Cys99 (acyl-thioester intermediate) is an active-site residue. Catalysis depends on proton acceptor residues His392 and Cys422.

This sequence belongs to the thiolase-like superfamily. Thiolase family. In terms of assembly, heterotetramer of two alpha chains (FadJ) and two beta chains (FadI).

The protein resides in the cytoplasm. It carries out the reaction an acyl-CoA + acetyl-CoA = a 3-oxoacyl-CoA + CoA. The protein operates within lipid metabolism; fatty acid beta-oxidation. In terms of biological role, catalyzes the final step of fatty acid oxidation in which acetyl-CoA is released and the CoA ester of a fatty acid two carbons shorter is formed. The polypeptide is 3-ketoacyl-CoA thiolase (Escherichia coli O6:H1 (strain CFT073 / ATCC 700928 / UPEC)).